The primary structure comprises 558 residues: Membrane transporter D2 (558 aa).

The interval 1-28 (MTLKKRSSAPELPTSLDEDEEEDSPQPL) is disordered. Residues 1–38 (MTLKKRSSAPELPTSLDEDEEEDSPQPLSNTPFFSMKN) lie on the Cytoplasmic side of the membrane. Residues 39–59 (LIVATPIILTPLLYGYNLGFV) form a helical membrane-spanning segment. Topologically, residues 60–152 (GPYSTMYGYA…QVGYSSIQSG (93 aa)) are extracellular. Residues 153 to 173 (VFAGSLVIGSTMGALMGGYLT) form a helical membrane-spanning segment. Topologically, residues 174-179 (KRLDYC) are cytoplasmic. Residues 180–200 (KSFLFIGLLSVIGNVLTHVAT) traverse the membrane as a helical segment. At 201–204 (GLFH) the chain is on the extracellular side. The chain crosses the membrane as a helical span at residues 205-225 (YWVLFVARIVLGFPLGWQSIT). At 226–241 (SSHYTDKFAPANHAKT) the chain is on the cytoplasmic side. A helical membrane pass occupies residues 242–262 (LGTLFQVSVSTGIFVTSFFGL). Topologically, residues 263-281 (VLGNTIQYDAASNANTMGR) are extracellular. The chain crosses the membrane as a helical span at residues 282 to 302 (MQGLVSVSTLLSIFVVFLPLI). Over 303–335 (TKDGYSKSRRGDYEGENSEDASRKAAEEYTMTQ) the chain is Cytoplasmic. A helical membrane pass occupies residues 336–356 (MIGPILNGVAMGCVTQLTGIN). Over 357–373 (ANMNFAPTIMSNLGLQP) the chain is Extracellular. A helical transmembrane segment spans residues 374–394 (LVGNIIVMAWNMLATFCVIPL). Over 395 to 402 (SRRFSMRT) the chain is Cytoplasmic. Residues 403-423 (LFLFCGFVGSLCCVFLGGIPV) traverse the membrane as a helical segment. Topologically, residues 424-441 (YPGVTKSDKAISGIAITG) are extracellular. The chain crosses the membrane as a helical span at residues 442-463 (IAIFIALYEMGVGPCFYVLAVD). Topologically, residues 464–478 (VFPESFRPIGSSITV) are cytoplasmic. A helical transmembrane segment spans residues 479–499 (GVMFIFNLIINICYPIATEGI). The Extracellular portion of the chain corresponds to 500-512 (SGGPSGNPNKGQA). Residues 513–533 (VAFIFFGCIGVVACVIEYFFL) form a helical membrane-spanning segment. Residues 534 to 558 (QPWVEPEAKMTDDLDGAAVPEGKHD) are Cytoplasmic-facing.

It belongs to the major facilitator superfamily. Sugar transporter (TC 2.A.1.1) family.

It localises to the membrane. The chain is Membrane transporter D2 from Leishmania donovani.